A 163-amino-acid chain; its full sequence is Nucleotide-binding protein cbdbA1256 (163 aa).

It belongs to the YajQ family.

Nucleotide-binding protein. This is Nucleotide-binding protein cbdbA1256 from Dehalococcoides mccartyi (strain CBDB1).